Here is a 264-residue protein sequence, read N- to C-terminus: MIEAVNICVQRGKKQILNHIDFQAKSSALTVIIGPNGSGKSTFVKALSGEIPYSGKMTLNGHDVTHTKTYEMAAMRAVLPQFTTLAFPFLVHEVVALGLSVNQFTIAKKQLQNLPQKALECVGLADYGNRHYHQLSGGEQARVQLARVLCQIWEPVCNKVPRWMILDEPIANLDIQHQLVVMNIARNFARCGGGVLAVLHDLNLAAHYADKMILLKQGKIYCEGSASTVLTTQNLSDAYHCSLPVSELPKADTPFVLPQTASFL.

One can recognise an ABC transporter domain in the interval 2-242; that stretch reads IEAVNICVQR…QNLSDAYHCS (241 aa). ATP is bound at residue 34–41; that stretch reads GPNGSGKS.

This sequence belongs to the ABC transporter superfamily. Heme (hemin) importer (TC 3.A.1.14.5) family. As to quaternary structure, the complex is composed of two ATP-binding proteins (HmuV), two transmembrane proteins (HmuU) and a solute-binding protein (HmuT).

It localises to the cell inner membrane. Its function is as follows. Part of the ABC transporter complex HmuTUV involved in hemin import. Responsible for energy coupling to the transport system. The chain is Hemin import ATP-binding protein HmuV from Bartonella quintana (strain Toulouse) (Rochalimaea quintana).